Here is a 171-residue protein sequence, read N- to C-terminus: ATP synthase subunit b (171 aa).

The chain crosses the membrane as a helical span at residues 2–22 (FVVKMVLGFLILLSPLCATGL).

The protein belongs to the ATPase B chain family. In terms of assembly, F-type ATPases have 2 components, F(1) - the catalytic core - and F(0) - the membrane proton channel. F(1) has five subunits: alpha(3), beta(3), gamma(1), delta(1), epsilon(1). F(0) has three main subunits: a(1), b(2) and c(10-14). The alpha and beta chains form an alternating ring which encloses part of the gamma chain. F(1) is attached to F(0) by a central stalk formed by the gamma and epsilon chains, while a peripheral stalk is formed by the delta and b chains.

The protein resides in the cell inner membrane. In terms of biological role, f(1)F(0) ATP synthase produces ATP from ADP in the presence of a proton or sodium gradient. F-type ATPases consist of two structural domains, F(1) containing the extramembraneous catalytic core and F(0) containing the membrane proton channel, linked together by a central stalk and a peripheral stalk. During catalysis, ATP synthesis in the catalytic domain of F(1) is coupled via a rotary mechanism of the central stalk subunits to proton translocation. Its function is as follows. Component of the F(0) channel, it forms part of the peripheral stalk, linking F(1) to F(0). This is ATP synthase subunit b from Helicobacter pylori (strain ATCC 700392 / 26695) (Campylobacter pylori).